A 97-amino-acid polypeptide reads, in one-letter code: YcgL domain-containing protein Psyr_1564 (97 aa).

The region spanning 3–87 (RICSIYRSPK…AEDDYIEHLP (85 aa)) is the YcgL domain.

This is YcgL domain-containing protein Psyr_1564 from Pseudomonas syringae pv. syringae (strain B728a).